A 285-amino-acid polypeptide reads, in one-letter code: Nucleotide-binding protein PSPTO_4456 (285 aa).

Residue 8-15 participates in ATP binding; it reads GRSGSGKS. Position 60–63 (60–63) interacts with GTP; that stretch reads DARN.

It belongs to the RapZ-like family.

Its function is as follows. Displays ATPase and GTPase activities. This Pseudomonas syringae pv. tomato (strain ATCC BAA-871 / DC3000) protein is Nucleotide-binding protein PSPTO_4456.